The sequence spans 199 residues: Peptidyl-tRNA hydrolase (199 aa).

Tyr25 lines the tRNA pocket. His30 serves as the catalytic Proton acceptor. TRNA is bound by residues Tyr76, Asn78, and Asn124.

The protein belongs to the PTH family. In terms of assembly, monomer.

The protein resides in the cytoplasm. It catalyses the reaction an N-acyl-L-alpha-aminoacyl-tRNA + H2O = an N-acyl-L-amino acid + a tRNA + H(+). Functionally, hydrolyzes ribosome-free peptidyl-tRNAs (with 1 or more amino acids incorporated), which drop off the ribosome during protein synthesis, or as a result of ribosome stalling. Catalyzes the release of premature peptidyl moieties from peptidyl-tRNA molecules trapped in stalled 50S ribosomal subunits, and thus maintains levels of free tRNAs and 50S ribosomes. The chain is Peptidyl-tRNA hydrolase from Mycobacterium leprae (strain Br4923).